A 131-amino-acid polypeptide reads, in one-letter code: MAGIKALVGLSFSGAIGLTFLMLGCALEYYGVYWPMFVLIFYFICPIPHFIARRVSDDSDAASSACRELAYFFTTGIVVSAFGFPIILARVEAIKWGACGLVLAGNAVIFLTILGFFLVFGRGDDFSWEQW.

The next 4 membrane-spanning stretches (helical) occupy residues 7-27 (LVGLSFSGAIGLTFLMLGCAL), 32-52 (VYWPMFVLIFYFICPIPHFIA), 69-89 (LAYFFTTGIVVSAFGFPIILA), and 100-120 (GLVLAGNAVIFLTILGFFLVF).

It belongs to the OB-RGRP/VPS55 family.

The protein resides in the golgi apparatus membrane. Its subcellular location is the endosome membrane. Functionally, involved in protein trafficking. May be involved in the down-regulation of membrane protein levels. This chain is Leptin receptor gene-related protein (LEPROT), found in Gallus gallus (Chicken).